The sequence spans 230 residues: Orotidine 5'-phosphate decarboxylase (230 aa).

Substrate is bound by residues aspartate 11, lysine 34, 61 to 70 (DLKLHDIPNT), threonine 117, arginine 179, glutamine 188, glycine 208, and arginine 209. The active-site Proton donor is the lysine 63.

The protein belongs to the OMP decarboxylase family. Type 1 subfamily. As to quaternary structure, homodimer.

The enzyme catalyses orotidine 5'-phosphate + H(+) = UMP + CO2. Its pathway is pyrimidine metabolism; UMP biosynthesis via de novo pathway; UMP from orotate: step 2/2. Functionally, catalyzes the decarboxylation of orotidine 5'-monophosphate (OMP) to uridine 5'-monophosphate (UMP). This chain is Orotidine 5'-phosphate decarboxylase, found in Streptococcus sanguinis (strain SK36).